A 428-amino-acid polypeptide reads, in one-letter code: Chaperone SurA (428 aa).

The N-terminal stretch at 1 to 20 is a signal peptide; sequence MKNWKTLLLGIAMIANTSFA. PpiC domains lie at 171-272 and 282-382; these read STEL…KVND and VTEV…ELLD.

Its subcellular location is the periplasm. The catalysed reaction is [protein]-peptidylproline (omega=180) = [protein]-peptidylproline (omega=0). Its function is as follows. Chaperone involved in the correct folding and assembly of outer membrane proteins. Recognizes specific patterns of aromatic residues and the orientation of their side chains, which are found more frequently in integral outer membrane proteins. May act in both early periplasmic and late outer membrane-associated steps of protein maturation. In Salmonella paratyphi A (strain ATCC 9150 / SARB42), this protein is Chaperone SurA.